The chain runs to 262 residues: Acyl-[acyl-carrier-protein]--UDP-N-acetylglucosamine O-acyltransferase (262 aa).

Belongs to the transferase hexapeptide repeat family. LpxA subfamily. Homotrimer.

The protein resides in the cytoplasm. The catalysed reaction is a (3R)-hydroxyacyl-[ACP] + UDP-N-acetyl-alpha-D-glucosamine = a UDP-3-O-[(3R)-3-hydroxyacyl]-N-acetyl-alpha-D-glucosamine + holo-[ACP]. The protein operates within glycolipid biosynthesis; lipid IV(A) biosynthesis; lipid IV(A) from (3R)-3-hydroxytetradecanoyl-[acyl-carrier-protein] and UDP-N-acetyl-alpha-D-glucosamine: step 1/6. Its function is as follows. Involved in the biosynthesis of lipid A, a phosphorylated glycolipid that anchors the lipopolysaccharide to the outer membrane of the cell. The chain is Acyl-[acyl-carrier-protein]--UDP-N-acetylglucosamine O-acyltransferase from Campylobacter concisus (strain 13826).